The sequence spans 367 residues: Phosphoribosylaminoimidazole-succinocarboxamide synthase (367 aa).

The protein belongs to the SAICAR synthetase family.

The enzyme catalyses 5-amino-1-(5-phospho-D-ribosyl)imidazole-4-carboxylate + L-aspartate + ATP = (2S)-2-[5-amino-1-(5-phospho-beta-D-ribosyl)imidazole-4-carboxamido]succinate + ADP + phosphate + 2 H(+). Its pathway is purine metabolism; IMP biosynthesis via de novo pathway; 5-amino-1-(5-phospho-D-ribosyl)imidazole-4-carboxamide from 5-amino-1-(5-phospho-D-ribosyl)imidazole-4-carboxylate: step 1/2. The polypeptide is Phosphoribosylaminoimidazole-succinocarboxamide synthase (Vibrio vulnificus (strain CMCP6)).